Here is a 310-residue protein sequence, read N- to C-terminus: Bifunctional protein FolD 3, chloroplastic (310 aa).

Residues 1–48 (MFTDCSSSTTSRLIHLYNRNGVFLPRPSVSQFSLRTTASTWRCTLSIR) constitute a chloroplast transit peptide.

This sequence belongs to the tetrahydrofolate dehydrogenase/cyclohydrolase family. In terms of assembly, homodimer.

It is found in the plastid. The protein resides in the chloroplast. The enzyme catalyses (6R)-5,10-methylene-5,6,7,8-tetrahydrofolate + NADP(+) = (6R)-5,10-methenyltetrahydrofolate + NADPH. It carries out the reaction (6R)-5,10-methenyltetrahydrofolate + H2O = (6R)-10-formyltetrahydrofolate + H(+). Its pathway is one-carbon metabolism; tetrahydrofolate interconversion. Its function is as follows. Catalyzes the oxidation of 5,10-methylenetetrahydrofolate to 5,10-methenyltetrahydrofolate and then the hydrolysis of 5,10-methenyltetrahydrofolate to 10-formyltetrahydrofolate. In Arabidopsis thaliana (Mouse-ear cress), this protein is Bifunctional protein FolD 3, chloroplastic (FOLD3).